Here is a 56-residue protein sequence, read N- to C-terminus: Large ribosomal subunit protein bL33 (56 aa).

The protein belongs to the bacterial ribosomal protein bL33 family.

In Actinobacillus pleuropneumoniae serotype 5b (strain L20), this protein is Large ribosomal subunit protein bL33.